The chain runs to 128 residues: Sulfurtransferase TusD (128 aa).

The active-site Cysteine persulfide intermediate is the C78.

This sequence belongs to the DsrE/TusD family. In terms of assembly, heterohexamer, formed by a dimer of trimers. The hexameric TusBCD complex contains 2 copies each of TusB, TusC and TusD. The TusBCD complex interacts with TusE.

It localises to the cytoplasm. Part of a sulfur-relay system required for 2-thiolation of 5-methylaminomethyl-2-thiouridine (mnm(5)s(2)U) at tRNA wobble positions. Accepts sulfur from TusA and transfers it in turn to TusE. The polypeptide is Sulfurtransferase TusD (Salmonella typhi).